The following is a 782-amino-acid chain: Polyribonucleotide nucleotidyltransferase (782 aa).

Positions 514 and 520 each coordinate Mg(2+). Positions 580–639 (PRIITIKIPVDQIGAVIGPKGKIINQIQDDTGAEITIEDDGTIYIGATEGTAAEAARAAI) constitute a KH domain. The 73-residue stretch at 651–723 (GERYLGTVVK…ARGKLSLVPV (73 aa)) folds into the S1 motif domain. Over residues 734 to 753 (AGAGESAASGGAPRSAGGPQ) the composition is skewed to low complexity. Residues 734-782 (AGAGESAASGGAPRSAGGPQPREHQGPGRPRGRGGDHGGEGRQRTRRRH) are disordered. Over residues 766–776 (RGGDHGGEGRQ) the composition is skewed to basic and acidic residues.

The protein belongs to the polyribonucleotide nucleotidyltransferase family. Mg(2+) is required as a cofactor.

The protein localises to the cytoplasm. The enzyme catalyses RNA(n+1) + phosphate = RNA(n) + a ribonucleoside 5'-diphosphate. Involved in mRNA degradation. Catalyzes the phosphorolysis of single-stranded polyribonucleotides processively in the 3'- to 5'-direction. This Acidothermus cellulolyticus (strain ATCC 43068 / DSM 8971 / 11B) protein is Polyribonucleotide nucleotidyltransferase.